The following is a 290-amino-acid chain: Porphobilinogen deaminase (290 aa).

An S-(dipyrrolylmethanemethyl)cysteine modification is found at cysteine 237.

Belongs to the HMBS family. As to quaternary structure, monomer. Requires dipyrromethane as cofactor.

It catalyses the reaction 4 porphobilinogen + H2O = hydroxymethylbilane + 4 NH4(+). The protein operates within porphyrin-containing compound metabolism; protoporphyrin-IX biosynthesis; coproporphyrinogen-III from 5-aminolevulinate: step 2/4. Its function is as follows. Tetrapolymerization of the monopyrrole PBG into the hydroxymethylbilane pre-uroporphyrinogen in several discrete steps. This Clostridium botulinum (strain ATCC 19397 / Type A) protein is Porphobilinogen deaminase.